The following is a 97-amino-acid chain: Non-pathogenic pore-forming peptide amoebapore A (97 aa).

Positions 1-20 are cleaved as a signal peptide; the sequence is MKAIVFVLIFAVAFAVTLRQ. The Saposin B-type domain occupies 21–97; sequence GPIVCNLCTG…NAICAKIHAC (77 aa). 3 cysteine pairs are disulfide-bonded: Cys25–Cys97, Cys28–Cys91, and Cys55–Cys66.

In terms of assembly, monomer. Homodimer. Hexamer; formed during insertion in the membrane.

The protein localises to the cytoplasmic granule. Forms pores in the cell membrane of host cells. Implicated in the cytolytic activity of the parasite. Pore forming activity is lower compared to the activity of ameobapore A from the pathogenic strain HM-1:IMSS. The sequence is that of Non-pathogenic pore-forming peptide amoebapore A from Entamoeba histolytica.